A 244-amino-acid polypeptide reads, in one-letter code: Small ribosomal subunit protein uS3 (244 aa).

The region spanning 39–107 is the KH type-2 domain; the sequence is VREMLRKKLA…PAHINVTEVR (69 aa). The disordered stretch occupies residues 213-244; the sequence is VGQEKQDDSPRNDRNDRGDRGDRPSRPAREAR. Positions 216-244 are enriched in basic and acidic residues; sequence EKQDDSPRNDRNDRGDRGDRPSRPAREAR.

This sequence belongs to the universal ribosomal protein uS3 family. Part of the 30S ribosomal subunit. Forms a tight complex with proteins S10 and S14.

Its function is as follows. Binds the lower part of the 30S subunit head. Binds mRNA in the 70S ribosome, positioning it for translation. This is Small ribosomal subunit protein uS3 from Xanthomonas euvesicatoria pv. vesicatoria (strain 85-10) (Xanthomonas campestris pv. vesicatoria).